A 346-amino-acid chain; its full sequence is Outer membrane protein A (346 aa).

A signal peptide spans methionine 1–alanine 21. 8 beta stranded membrane-spanning segments follow: residues threonine 27–serine 37, glutamine 55–valine 66, valine 70–tryptophan 78, glutamine 96–proline 107, leucine 112–glycine 120, proline 142–alanine 151, isoleucine 156–glutamine 163, and methionine 182–arginine 190. The hinge-like stretch occupies residues alanine 197–proline 208. A run of 4 repeats spans residues alanine 201–proline 202, alanine 203–proline 204, alanine 205–proline 206, and alanine 207–proline 208. The interval alanine 201–proline 208 is 4 X 2 AA tandem repeats of A-P. Positions valine 210–lysine 338 constitute an OmpA-like domain. Cysteine 311 and cysteine 323 form a disulfide bridge.

This sequence belongs to the outer membrane OOP (TC 1.B.6) superfamily. OmpA family. In terms of assembly, monomer and homodimer.

The protein localises to the cell outer membrane. In terms of biological role, with TolR probably plays a role in maintaining the position of the peptidoglycan cell wall in the periplasm. Acts as a porin with low permeability that allows slow penetration of small solutes; an internal gate slows down solute passage. Its function is as follows. Required for conjugation with F-type plasmids; probably serves as the mating receptor on recipient cells. The protein is Outer membrane protein A of Escherichia coli O157:H7.